A 368-amino-acid chain; its full sequence is Protein HGH1 homolog (368 aa).

Belongs to the HGH1 family.

The protein is Protein HGH1 homolog of Drosophila pseudoobscura pseudoobscura (Fruit fly).